Here is a 351-residue protein sequence, read N- to C-terminus: Glycerol-1-phosphate dehydrogenase [NAD(P)+] (351 aa).

NAD(+) contacts are provided by residues 97-101 (GKTID) and 119-122 (TAPS). Asp-124 provides a ligand contact to substrate. Ser-128 provides a ligand contact to NAD(+). Asp-171 contributes to the substrate binding site. Zn(2+) contacts are provided by Asp-171 and His-251. His-255 serves as a coordination point for substrate. His-267 contacts Zn(2+).

It belongs to the glycerol-1-phosphate dehydrogenase family. Homodimer. Zn(2+) is required as a cofactor.

The protein localises to the cytoplasm. The enzyme catalyses sn-glycerol 1-phosphate + NAD(+) = dihydroxyacetone phosphate + NADH + H(+). It catalyses the reaction sn-glycerol 1-phosphate + NADP(+) = dihydroxyacetone phosphate + NADPH + H(+). Its pathway is membrane lipid metabolism; glycerophospholipid metabolism. In terms of biological role, catalyzes the NAD(P)H-dependent reduction of dihydroxyacetonephosphate (DHAP or glycerone phosphate) to glycerol 1-phosphate (G1P). The G1P thus generated is used as the glycerophosphate backbone of phospholipids in the cellular membranes of Archaea. The protein is Glycerol-1-phosphate dehydrogenase [NAD(P)+] of Metallosphaera sedula (strain ATCC 51363 / DSM 5348 / JCM 9185 / NBRC 15509 / TH2).